A 492-amino-acid chain; its full sequence is Glutamyl-tRNA(Gln) amidotransferase subunit A (492 aa).

Catalysis depends on charge relay system residues Lys-78 and Ser-158. The Acyl-ester intermediate role is filled by Ser-182.

Belongs to the amidase family. GatA subfamily. Heterotrimer of A, B and C subunits.

It catalyses the reaction L-glutamyl-tRNA(Gln) + L-glutamine + ATP + H2O = L-glutaminyl-tRNA(Gln) + L-glutamate + ADP + phosphate + H(+). In terms of biological role, allows the formation of correctly charged Gln-tRNA(Gln) through the transamidation of misacylated Glu-tRNA(Gln) in organisms which lack glutaminyl-tRNA synthetase. The reaction takes place in the presence of glutamine and ATP through an activated gamma-phospho-Glu-tRNA(Gln). In Rhodopseudomonas palustris (strain BisA53), this protein is Glutamyl-tRNA(Gln) amidotransferase subunit A.